The primary structure comprises 538 residues: Syncytin-1 (538 aa).

An N-terminal signal peptide occupies residues Met-1 to Thr-20. The Extracellular segment spans residues Ala-21 to Gln-443. Residue Asn-169 is glycosylated (N-linked (GlcNAc...) asparagine). Residues Cys-186–Cys-189 carry the CXXC motif. 3 disulfide bridges follow: Cys-186/Cys-189, Cys-186/Cys-405, and Cys-397/Cys-404. Asn-208, Asn-214, Asn-234, Asn-242, and Asn-281 each carry an N-linked (GlcNAc...) asparagine glycan. Residues Ile-320–Ile-340 form a fusion peptide region. Positions Leu-380 to Thr-396 are immunosuppression. The CX6CC signature appears at Cys-397–Tyr-406. Asn-409 is a glycosylation site (N-linked (GlcNAc...) asparagine). Residues Trp-444–Phe-464 traverse the membrane as a helical segment. The interval Gly-465–Lys-484 is essential for the fusiogenic function. Over Gly-465 to Ser-538 the chain is Cytoplasmic. Residues Lys-496–Ser-538 are disordered.

It belongs to the gamma type-C retroviral envelope protein family. HERV class-I W env subfamily. As to quaternary structure, the mature envelope protein (Env) consists of a trimer of SU-TM heterodimers attached probably by a labile interchain disulfide bond. Interacts with the C-type lectin CD209/DC-SIGN. In terms of processing, specific enzymatic cleavages in vivo yield mature proteins. Envelope glycoproteins are synthesized as an inactive precursor that is heavily N-glycosylated and processed likely by furin in the Golgi to yield the mature SU and TM proteins. The cleavage site between SU and TM requires the minimal sequence [KR]-X-[KR]-R. The intracytoplasmic tail cleavage by the viral protease that is required for the fusiogenic activity of some retroviruses envelope proteins seems to have been lost during evolution. The CXXC motif is highly conserved across a broad range of retroviral envelope proteins. It is thought to participate in the formation of a labile disulfide bond possibly with the CX6CC motif present in the transmembrane protein. Isomerization of the intersubunit disulfide bond to an SU intrachain disulfide bond is thought to occur upon receptor recognition in order to allow membrane fusion. As to expression, expressed at higher level in placental syncytiotrophoblast. Expressed at intermediate level in testis. Seems also to be found at low level in adrenal tissue, bone marrow, breast, colon, kidney, ovary, prostate, skin, spleen, thymus, thyroid, brain and trachea. Both mRNA and protein levels are significantly increased in the brain of individuals with multiple sclerosis, particularly in astrocytes and microglia.

It localises to the cell membrane. Its subcellular location is the virion. Functionally, this endogenous retroviral envelope protein has retained its original fusogenic properties and participates in trophoblast fusion and the formation of a syncytium during placenta morphogenesis. May induce fusion through binding of SLC1A4 and SLC1A5. Endogenous envelope proteins may have kept, lost or modified their original function during evolution. Retroviral envelope proteins mediate receptor recognition and membrane fusion during early infection. The surface protein (SU) mediates receptor recognition, while the transmembrane protein (TM) acts as a class I viral fusion protein. The protein may have at least 3 conformational states: pre-fusion native state, pre-hairpin intermediate state, and post-fusion hairpin state. During viral and target cell membrane fusion, the coiled coil regions (heptad repeats) assume a trimer-of-hairpins structure, positioning the fusion peptide in close proximity to the C-terminal region of the ectodomain. The formation of this structure appears to drive apposition and subsequent fusion of membranes. This chain is Syncytin-1 (ERVW-1), found in Homo sapiens (Human).